An 89-amino-acid chain; its full sequence is Small ribosomal subunit protein uS15 (89 aa).

This sequence belongs to the universal ribosomal protein uS15 family. In terms of assembly, part of the 30S ribosomal subunit. Forms a bridge to the 50S subunit in the 70S ribosome, contacting the 23S rRNA.

Functionally, one of the primary rRNA binding proteins, it binds directly to 16S rRNA where it helps nucleate assembly of the platform of the 30S subunit by binding and bridging several RNA helices of the 16S rRNA. In terms of biological role, forms an intersubunit bridge (bridge B4) with the 23S rRNA of the 50S subunit in the ribosome. In Streptococcus agalactiae serotype Ia (strain ATCC 27591 / A909 / CDC SS700), this protein is Small ribosomal subunit protein uS15.